We begin with the raw amino-acid sequence, 103 residues long: MAKKSLIQREKKRQKLEQKYHLIRQSLKKKIRSKVSPLSLSEKTKIREQLQSLPRNSAPTRLHRRCFLTGRPRANYRDFGLSGHVLREMVYECLLPGATRSSW.

It belongs to the universal ribosomal protein uS14 family. In terms of assembly, part of the 30S ribosomal subunit.

Its subcellular location is the plastid. It is found in the chloroplast. Binds 16S rRNA, required for the assembly of 30S particles. The protein is Small ribosomal subunit protein uS14c of Agrostis stolonifera (Creeping bentgrass).